The chain runs to 53 residues: Large ribosomal subunit protein eL40 (53 aa).

Belongs to the eukaryotic ribosomal protein eL40 family.

The chain is Large ribosomal subunit protein eL40 from Pyrobaculum neutrophilum (strain DSM 2338 / JCM 9278 / NBRC 100436 / V24Sta) (Thermoproteus neutrophilus).